The following is a 222-amino-acid chain: Putative thymidylate synthase (222 aa).

Cys139 is a catalytic residue.

It belongs to the thymidylate synthase family. Archaeal-type ThyA subfamily. Monomer.

The protein localises to the cytoplasm. Its pathway is pyrimidine metabolism; dTTP biosynthesis. Its function is as follows. May catalyze the biosynthesis of dTMP using an unknown cosubstrate. This chain is Putative thymidylate synthase, found in Methanocaldococcus jannaschii (strain ATCC 43067 / DSM 2661 / JAL-1 / JCM 10045 / NBRC 100440) (Methanococcus jannaschii).